The chain runs to 237 residues: Uracil-DNA glycosylase (237 aa).

Aspartate 77 serves as the catalytic Proton acceptor.

Belongs to the uracil-DNA glycosylase (UDG) superfamily. UNG family.

It is found in the cytoplasm. The enzyme catalyses Hydrolyzes single-stranded DNA or mismatched double-stranded DNA and polynucleotides, releasing free uracil.. Excises uracil residues from the DNA which can arise as a result of misincorporation of dUMP residues by DNA polymerase or due to deamination of cytosine. This chain is Uracil-DNA glycosylase, found in Acinetobacter baumannii (strain AB307-0294).